A 2845-amino-acid polypeptide reads, in one-letter code: Adenomatous polyposis coli protein (2845 aa).

Ala-2 is modified (N-acetylalanine). The stretch at Ala-2–Thr-61 forms a coiled coil. Residues Ser-105 and Ser-109 each carry the phosphoserine modification. A coiled-coil region spans residues Ser-125–Gln-245. The disordered stretch occupies residues Ala-238–Ser-304. A compositionally biased stretch (basic and acidic residues) spans Glu-239–Gly-263. Residues Glu-266–Ala-279 show a composition bias toward polar residues. 7 ARM repeats span residues Leu-451–Val-493, Leu-503–Val-545, Leu-546–Ala-589, Leu-590–Ile-636, Leu-637–Thr-681, Leu-682–Ala-723, and Leu-724–Gln-765. Phosphoserine is present on residues Ser-742, Ser-746, and Ser-778. A disordered region spans residues Val-828–Lys-873. A compositionally biased stretch (low complexity) spans Ser-831 to Ser-841. The segment covering Ser-842–Gly-855 has biased composition (basic and acidic residues). Over residues His-862 to Lys-873 the composition is skewed to polar residues. Residue Ser-906 is modified to Phosphoserine. Disordered regions lie at residues Arg-921–Asn-942 and Arg-956–Glu-986. Residues His-927–Asn-942 show a composition bias toward polar residues. Low complexity predominate over residues Asn-959 to Asp-969. 3 positions are modified to phosphoserine: Ser-985, Ser-1036, and Ser-1040. The tract at residues Glu-1018 to Glu-1168 is interaction with catenins. Disordered regions lie at residues Ile-1058 to Asn-1079, Gly-1092 to Glu-1168, Ser-1189 to Cys-1247, and Glu-1307 to Tyr-1375. 2 stretches are compositionally biased toward polar residues: residues Ala-1066–Glu-1078 and Arg-1103–Cys-1128. Over residues Ser-1189 to Ser-1204 the composition is skewed to low complexity. Residues Ser-1211–Thr-1245 show a composition bias toward polar residues. Residues Ser-1354–Ala-1365 are compositionally biased toward low complexity. Phosphoserine occurs at positions 1359, 1370, 1384, 1391, and 1394. 5 disordered regions span residues Ile-1400 to Ala-1474, Pro-1525 to Asp-1568, Arg-1587 to Lys-1606, Asp-1746 to Ser-2010, and Ile-2042 to Gly-2069. Thr-1437 is subject to Phosphothreonine. Positions Ala-1447–Gly-1465 are enriched in basic and acidic residues. Positions Asn-1532 to Glu-1546 are enriched in acidic residues. Residues Asn-1547 to Leu-1562 show a composition bias toward basic and acidic residues. Ser-1565 is modified (phosphoserine). Residues Gln-1747–Gln-1762 show a composition bias toward polar residues. Ser-1772 is modified (phosphoserine). Residues Tyr-1783–Asp-1792 are compositionally biased toward basic and acidic residues. A phosphoserine mark is found at Ser-1859, Ser-1861, and Ser-1862. The tract at residues Asp-1864–Lys-1891 is highly charged. The span at Asp-1871–Cys-1894 shows a compositional bias: basic and acidic residues. A compositionally biased stretch (low complexity) spans Ser-1900–Ser-1911. A compositionally biased stretch (polar residues) spans Lys-1927–Lys-1936. Basic and acidic residues predominate over residues Asp-1937–Leu-1949. A phosphoserine mark is found at Ser-1969 and Ser-1971. Basic and acidic residues predominate over residues Asn-1979–Glu-1990. Residues Glu-2034–Glu-2058 form an interaction with AXIN1 region. Ser-2087, Ser-2092, Ser-2125, Ser-2129, Ser-2130, and Ser-2132 each carry phosphoserine. 3 disordered regions span residues Ser-2146–Gly-2190, Lys-2202–Ser-2652, and Cys-2664–Val-2845. Position 2151 is a phosphothreonine (Thr-2151). The basic region stretch occupies residues Ile-2167–Ser-2674. Positions Lys-2169–Gly-2187 are enriched in basic and acidic residues. 2 stretches are compositionally biased toward polar residues: residues Ile-2203–Ser-2223 and Ala-2257–Arg-2272. Phosphoserine is present on residues Ser-2260, Ser-2270, and Ser-2283. Over residues Ser-2290–Arg-2311 the composition is skewed to low complexity. The segment covering Pro-2312 to Pro-2331 has biased composition (polar residues). Over residues Thr-2348–Pro-2369 the composition is skewed to low complexity. Polar residues predominate over residues Gly-2370–Asn-2411. Low complexity-rich tracts occupy residues Ser-2417 to Ser-2429 and Ser-2459 to Ser-2477. Residues Ser-2473 and Ser-2535 each carry the phosphoserine modification. Positions Thr-2475–Val-2845 are interaction with DLG1. Residues Asn-2518 to Ser-2535 show a composition bias toward basic and acidic residues. Over residues Ser-2555–Gly-2568 the composition is skewed to polar residues. At Ser-2569 the chain carries Phosphoserine. Residues Ser-2569–Glu-2579 show a composition bias toward low complexity. Residues Ser-2580–Val-2592 are compositionally biased toward basic and acidic residues. Residues Ala-2626 to Ala-2638 show a composition bias toward low complexity. Residues Asn-2668 to Thr-2679 show a composition bias toward polar residues. 2 positions are modified to phosphoserine: Ser-2671 and Ser-2674. The interaction with MAPRE1 stretch occupies residues Ser-2674 to Val-2845. Position 2679 is a phosphothreonine (Thr-2679). Residues Asp-2684–Ile-2694 show a composition bias toward low complexity. Over residues Lys-2695–Gly-2705 the composition is skewed to basic and acidic residues. The segment covering Lys-2706–Gln-2716 has biased composition (polar residues). 2 positions are modified to phosphoserine: Ser-2713 and Ser-2726. Positions Ser-2765–Ser-2776 are enriched in low complexity. Polar residues predominate over residues Phe-2786–Asn-2814. The residue at position 2791 (Ser-2791) is a Phosphoserine. A Microtubule tip localization signal motif is present at residues Ser-2805–Pro-2808. The PDZ-binding motif lies at Thr-2843–Val-2845.

Belongs to the adenomatous polyposis coli (APC) family. Forms homooligomers. Found in a complex consisting of ARHGEF4, APC and CTNNB1. Found in a complex composed of MACF1, APC, AXIN1, CTNNB1 and GSK3B. The complex composed, at least, of APC, CTNNB1 and GSK3B interacts with JPT1; the interaction requires the inactive form of GSK3B (phosphorylated at 'Ser-9'). Interacts with APC2. Interacts with DLG1 (via PDZ domains) and DLG3 (via PDZ domains). Interacts with alpha- and beta-catenins. Interacts with AXIN1 (via RGS domain). Interacts with ARHGEF4 (via N-terminus). Interacts (via C-terminal residues 2674-2843) with MAPRE1 (via C-terminal residues 206-211); the interaction inhibits association with and bundling of F-actin. Interacts with MAPRE2 and MAPRE3 (via C-terminus). Interacts with DIAPH1; DIAPH1 acts as a scaffold protein for MAPRE1 and APC to stabilize microtubules and promote cell migration. Interacts with DIAPH2. Interacts with SCRIB; may mediate targeting to adherens junctions of epithelial cells. Interacts with SPATA13 (via N-terminus and SH3 domain). Interacts with ASAP1 (via SH3 domain). Interacts (at the cell membrane) with AMER1 and AMER2 (via ARM repeats). Interacts with KHDRBS1. Interacts with actin; binds both to F-actin and actin filament bundles. Post-translationally, phosphorylated; phosphorylation enhances the F-actin bundling activity. Phosphorylated by GSK3B. In terms of processing, ubiquitinated, leading to its degradation by the proteasome. Ubiquitination is facilitated by Axin. Deubiquitinated by ZRANB1/TRABID. As to expression, expressed in liver, spleen, kidney, heart, lung, brain, stomach, intestine, testis and ovary.

Its subcellular location is the cell junction. The protein localises to the adherens junction. It localises to the cytoplasm. It is found in the cytoskeleton. The protein resides in the cell projection. Its subcellular location is the lamellipodium. The protein localises to the ruffle membrane. It localises to the cell membrane. Functionally, tumor suppressor. Promotes rapid degradation of CTNNB1 and participates in Wnt signaling as a negative regulator. APC activity is correlated with its phosphorylation state. Activates the GEF activity of SPATA13 and ARHGEF4. Plays a role in hepatocyte growth factor (HGF)-induced cell migration. Required for MMP9 up-regulation via the JNK signaling pathway in colorectal tumor cells. Associates with both microtubules and actin filaments, components of the cytoskeleton. Plays a role in mediating the organization of F-actin into ordered bundles. Functions downstream of Rho GTPases and DIAPH1 to selectively stabilize microtubules. Acts as a mediator of ERBB2-dependent stabilization of microtubules at the cell cortex. It is required for the localization of MACF1 to the cell membrane and this localization of MACF1 is critical for its function in microtubule stabilization. The protein is Adenomatous polyposis coli protein (Apc) of Mus musculus (Mouse).